We begin with the raw amino-acid sequence, 494 residues long: Probable malate:quinone oxidoreductase (494 aa).

The protein belongs to the MQO family. Requires FAD as cofactor.

The catalysed reaction is (S)-malate + a quinone = a quinol + oxaloacetate. The protein operates within carbohydrate metabolism; tricarboxylic acid cycle; oxaloacetate from (S)-malate (quinone route): step 1/1. The sequence is that of Probable malate:quinone oxidoreductase from Kocuria rhizophila (strain ATCC 9341 / DSM 348 / NBRC 103217 / DC2201).